A 545-amino-acid chain; its full sequence is Chaperonin GroEL (545 aa).

Residues 30–33, K51, 87–91, G415, 479–481, and D495 each bind ATP; these read TLGP, DGTTT, and NAA.

The protein belongs to the chaperonin (HSP60) family. As to quaternary structure, forms a cylinder of 14 subunits composed of two heptameric rings stacked back-to-back. Interacts with the co-chaperonin GroES.

It localises to the cytoplasm. The catalysed reaction is ATP + H2O + a folded polypeptide = ADP + phosphate + an unfolded polypeptide.. Functionally, together with its co-chaperonin GroES, plays an essential role in assisting protein folding. The GroEL-GroES system forms a nano-cage that allows encapsulation of the non-native substrate proteins and provides a physical environment optimized to promote and accelerate protein folding. This chain is Chaperonin GroEL, found in Tolumonas auensis (strain DSM 9187 / NBRC 110442 / TA 4).